A 189-amino-acid polypeptide reads, in one-letter code: Pyridoxal 5'-phosphate synthase subunit PdxT (189 aa).

An L-glutamine-binding site is contributed by Gly48–Ser50. Cys80 serves as the catalytic Nucleophile. L-glutamine contacts are provided by residues Arg107 and Ile136–Arg137. Residues His172 and Glu174 each act as charge relay system in the active site.

This sequence belongs to the glutaminase PdxT/SNO family. As to quaternary structure, in the presence of PdxS, forms a dodecamer of heterodimers. Only shows activity in the heterodimer.

The catalysed reaction is aldehydo-D-ribose 5-phosphate + D-glyceraldehyde 3-phosphate + L-glutamine = pyridoxal 5'-phosphate + L-glutamate + phosphate + 3 H2O + H(+). It catalyses the reaction L-glutamine + H2O = L-glutamate + NH4(+). It participates in cofactor biosynthesis; pyridoxal 5'-phosphate biosynthesis. In terms of biological role, catalyzes the hydrolysis of glutamine to glutamate and ammonia as part of the biosynthesis of pyridoxal 5'-phosphate. The resulting ammonia molecule is channeled to the active site of PdxS. The polypeptide is Pyridoxal 5'-phosphate synthase subunit PdxT (Ruminiclostridium cellulolyticum (strain ATCC 35319 / DSM 5812 / JCM 6584 / H10) (Clostridium cellulolyticum)).